We begin with the raw amino-acid sequence, 498 residues long: Glycerol kinase (498 aa).

Position 12 (T12) interacts with ADP. Positions 12, 13, and 14 each coordinate ATP. T12 contributes to the sn-glycerol 3-phosphate binding site. ADP is bound at residue R16. Sn-glycerol 3-phosphate is bound by residues R82, E83, and Y134. 3 residues coordinate glycerol: R82, E83, and Y134. H230 is modified (phosphohistidine; by HPr). A sn-glycerol 3-phosphate-binding site is contributed by D244. Glycerol is bound by residues D244 and Q245. Residues T266 and G309 each contribute to the ADP site. 4 residues coordinate ATP: T266, G309, Q313, and G410. Residues G410 and N414 each contribute to the ADP site.

This sequence belongs to the FGGY kinase family. Homotetramer and homodimer (in equilibrium). In terms of processing, the phosphoenolpyruvate-dependent sugar phosphotransferase system (PTS), including enzyme I, and histidine-containing protein (HPr) are required for the phosphorylation, which leads to the activation of the enzyme.

It catalyses the reaction glycerol + ATP = sn-glycerol 3-phosphate + ADP + H(+). It participates in polyol metabolism; glycerol degradation via glycerol kinase pathway; sn-glycerol 3-phosphate from glycerol: step 1/1. Activated by phosphorylation and inhibited by fructose 1,6-bisphosphate (FBP). Key enzyme in the regulation of glycerol uptake and metabolism. Catalyzes the phosphorylation of glycerol to yield sn-glycerol 3-phosphate. The sequence is that of Glycerol kinase from Staphylococcus aureus (strain bovine RF122 / ET3-1).